A 282-amino-acid chain; its full sequence is Pantothenate synthetase (282 aa).

Residue 30–37 coordinates ATP; sequence MGFLHDGH. The active-site Proton donor is His37. Residue Gln60 coordinates (R)-pantoate. Gln60 contacts beta-alanine. Residue 146–149 coordinates ATP; that stretch reads GQKD. Gln152 is a (R)-pantoate binding site. ATP-binding positions include Ile175 and 183–186; that span reads KSSR.

The protein belongs to the pantothenate synthetase family. Homodimer.

The protein resides in the cytoplasm. The catalysed reaction is (R)-pantoate + beta-alanine + ATP = (R)-pantothenate + AMP + diphosphate + H(+). Its pathway is cofactor biosynthesis; (R)-pantothenate biosynthesis; (R)-pantothenate from (R)-pantoate and beta-alanine: step 1/1. Functionally, catalyzes the condensation of pantoate with beta-alanine in an ATP-dependent reaction via a pantoyl-adenylate intermediate. The chain is Pantothenate synthetase from Campylobacter jejuni (strain RM1221).